We begin with the raw amino-acid sequence, 403 residues long: Acetate kinase (403 aa).

Residue N7 coordinates Mg(2+). ATP is bound at residue K14. Substrate is bound at residue R95. D152 serves as the catalytic Proton donor/acceptor. ATP is bound by residues 212-216 (HLGNG), 286-288 (DMR), and 335-339 (GIGEN). E389 provides a ligand contact to Mg(2+).

It belongs to the acetokinase family. As to quaternary structure, homodimer. It depends on Mg(2+) as a cofactor. Requires Mn(2+) as cofactor.

The protein localises to the cytoplasm. It carries out the reaction acetate + ATP = acetyl phosphate + ADP. It participates in metabolic intermediate biosynthesis; acetyl-CoA biosynthesis; acetyl-CoA from acetate: step 1/2. Its function is as follows. Catalyzes the formation of acetyl phosphate from acetate and ATP. Can also catalyze the reverse reaction. This chain is Acetate kinase, found in Desulfovibrio desulfuricans (strain ATCC 27774 / DSM 6949 / MB).